A 475-amino-acid polypeptide reads, in one-letter code: MASCRMGARSALEPCQVDCLDEAADERCAETPRCHAELLESVTGASRMSRYSIIVLDPIGTIRAAEALTALVDADDVIFKDEDPLKGIRSVFELGDLDPTNHEEIEFQGGALGRFAYDIARRLEAIRDLGDRELAGPDAGTALYDLILYDHQDDVIWILVPNEAGEQDPSEDFRDLVNAWSYDDEFDIGAEFGANYTDDAYADGVDRLKDYLGSGDMYQVNLAQRRVGMISAEDYQLYIRLRDANPAPYMAYLDIDEGLLVASPERIILDEASDLDTRPIAGTLRGRPRAGGDDEDDGRAIDLLRVDKDRAERIMIVDLDRNDIARVGVGGSVKVREIMGLERYSGVMHLVSQVTGDLQEAIEAVDLIRAGFPGGTLTGAPKVRTMEIIDELEPQRRAAYCGSIGYIAYKGNIDFKIAIPTLYALAGQLFCQAGGGVVGDSVPDGEYRESFEKGNALIRGLEIRHGAVVAQSEDK.

Belongs to the anthranilate synthase component I family. As to quaternary structure, monomer. Heterodimer consisting of two non-identical subunits: a glutamine amidotransferase subunit (PabA) and a aminodeoxychorismate synthase subunit (PabB). Requires Mg(2+) as cofactor.

The catalysed reaction is chorismate + L-glutamine = 4-amino-4-deoxychorismate + L-glutamate. It functions in the pathway cofactor biosynthesis; tetrahydrofolate biosynthesis; 4-aminobenzoate from chorismate: step 1/2. Part of a heterodimeric complex that catalyzes the two-step biosynthesis of 4-amino-4-deoxychorismate (ADC), a precursor of p-aminobenzoate (PABA) and tetrahydrofolate. In the first step, a glutamine amidotransferase (PabA) generates ammonia as a substrate that, along with chorismate, is used in the second step, catalyzed by aminodeoxychorismate synthase (PabB) to produce ADC. The polypeptide is Aminodeoxychorismate synthase component 1 (pabB) (Streptomyces lividans).